The following is a 1301-amino-acid chain: DNA-directed RNA polymerase subunit beta (1301 aa).

The protein belongs to the RNA polymerase beta chain family. As to quaternary structure, the RNAP catalytic core consists of 2 alpha, 1 beta, 1 beta' and 1 omega subunit. When a sigma factor is associated with the core the holoenzyme is formed, which can initiate transcription.

The catalysed reaction is RNA(n) + a ribonucleoside 5'-triphosphate = RNA(n+1) + diphosphate. DNA-dependent RNA polymerase catalyzes the transcription of DNA into RNA using the four ribonucleoside triphosphates as substrates. In Chlorobium luteolum (strain DSM 273 / BCRC 81028 / 2530) (Pelodictyon luteolum), this protein is DNA-directed RNA polymerase subunit beta.